A 298-amino-acid chain; its full sequence is 1D-myo-inositol 2-acetamido-2-deoxy-alpha-D-glucopyranoside deacetylase (298 aa).

Zn(2+) contacts are provided by His14, Asp17, and His148. The disordered stretch occupies residues 277-298; sequence RGPAGPDGREHDLFAGLDGPAT.

The protein belongs to the MshB deacetylase family. Requires Zn(2+) as cofactor.

The catalysed reaction is 1D-myo-inositol 2-acetamido-2-deoxy-alpha-D-glucopyranoside + H2O = 1D-myo-inositol 2-amino-2-deoxy-alpha-D-glucopyranoside + acetate. Its function is as follows. Catalyzes the deacetylation of 1D-myo-inositol 2-acetamido-2-deoxy-alpha-D-glucopyranoside (GlcNAc-Ins) in the mycothiol biosynthesis pathway. In Nocardia farcinica (strain IFM 10152), this protein is 1D-myo-inositol 2-acetamido-2-deoxy-alpha-D-glucopyranoside deacetylase.